A 123-amino-acid chain; its full sequence is Large ribosomal subunit protein bL12 (123 aa).

It belongs to the bacterial ribosomal protein bL12 family. As to quaternary structure, homodimer. Part of the ribosomal stalk of the 50S ribosomal subunit. Forms a multimeric L10(L12)X complex, where L10 forms an elongated spine to which 2 to 4 L12 dimers bind in a sequential fashion. Binds GTP-bound translation factors.

Forms part of the ribosomal stalk which helps the ribosome interact with GTP-bound translation factors. Is thus essential for accurate translation. In Rhodopseudomonas palustris (strain BisB18), this protein is Large ribosomal subunit protein bL12.